A 491-amino-acid chain; its full sequence is F-box protein At3g59000 (491 aa).

An F-box domain is found at 1 to 49 (MDRVGSLPDELLSHILSFLTTKEAALTSLLSKRWRYLIAFVPNLAFDDI).

In terms of assembly, part of a SCF (ASK-cullin-F-box) protein ligase complex. Interacts with ASK4.

The protein localises to the nucleus. It functions in the pathway protein modification; protein ubiquitination. In terms of biological role, component of SCF(ASK-cullin-F-box) E3 ubiquitin ligase complexes, which may mediate the ubiquitination and subsequent proteasomal degradation of target proteins. This is F-box protein At3g59000 from Arabidopsis thaliana (Mouse-ear cress).